The following is a 240-amino-acid chain: Uridylate kinase (240 aa).

13–16 contacts ATP; the sequence is KASG. The interval 21 to 26 is involved in allosteric activation by GTP; it reads GAQGFG. G55 serves as a coordination point for UMP. ATP contacts are provided by G56 and R60. Residues D75 and 136 to 143 contribute to the UMP site; that span reads TGNPFFTT. ATP-binding residues include T163, Q164, Y169, and D172.

This sequence belongs to the UMP kinase family. As to quaternary structure, homohexamer.

It localises to the cytoplasm. The enzyme catalyses UMP + ATP = UDP + ADP. It participates in pyrimidine metabolism; CTP biosynthesis via de novo pathway; UDP from UMP (UMPK route): step 1/1. Its activity is regulated as follows. Allosterically activated by GTP. Inhibited by UTP. Catalyzes the reversible phosphorylation of UMP to UDP. The sequence is that of Uridylate kinase from Rhizobium etli (strain ATCC 51251 / DSM 11541 / JCM 21823 / NBRC 15573 / CFN 42).